A 270-amino-acid chain; its full sequence is uncharacterized protein (270 aa).

A compositionally biased stretch (basic and acidic residues) spans 22–31 (EAPQRTEASR). Positions 22–42 (EAPQRTEASRTHPSPFLALPG) are disordered.

This is an uncharacterized protein from Homo sapiens (Human).